A 100-amino-acid chain; its full sequence is NAD(P)H-quinone oxidoreductase subunit 4L, chloroplastic (100 aa).

A run of 3 helical transmembrane segments spans residues 1-21 (MLEHALISGAYLFSIGIYGLI), 29-49 (ALMCLELILNAVNVNLVTFSN), and 63-83 (IFVTAIAAAEAAIGLAIALAI).

It belongs to the complex I subunit 4L family. As to quaternary structure, NDH is composed of at least 16 different subunits, 5 of which are encoded in the nucleus.

It is found in the plastid. Its subcellular location is the chloroplast thylakoid membrane. It carries out the reaction a plastoquinone + NADH + (n+1) H(+)(in) = a plastoquinol + NAD(+) + n H(+)(out). The catalysed reaction is a plastoquinone + NADPH + (n+1) H(+)(in) = a plastoquinol + NADP(+) + n H(+)(out). In terms of biological role, NDH shuttles electrons from NAD(P)H:plastoquinone, via FMN and iron-sulfur (Fe-S) centers, to quinones in the photosynthetic chain and possibly in a chloroplast respiratory chain. The immediate electron acceptor for the enzyme in this species is believed to be plastoquinone. Couples the redox reaction to proton translocation, and thus conserves the redox energy in a proton gradient. The sequence is that of NAD(P)H-quinone oxidoreductase subunit 4L, chloroplastic from Cycas taitungensis (Prince sago).